A 639-amino-acid chain; its full sequence is 3D-(3,5/4)-trihydroxycyclohexane-1,2-dione hydrolase (639 aa).

A thiamine diphosphate-binding site is contributed by Glu62. A thiamine pyrophosphate binding region spans residues 438–518 (SLPGDLQRMW…INILLFDNCG (81 aa)). Asp489 and Asn516 together coordinate Mg(2+).

Belongs to the TPP enzyme family. Requires Mg(2+) as cofactor. The cofactor is thiamine diphosphate.

The enzyme catalyses 3D-3,5/4-trihydroxycyclohexane-1,2-dione + H2O = 5-deoxy-D-glucuronate + H(+). Its pathway is polyol metabolism; myo-inositol degradation into acetyl-CoA; acetyl-CoA from myo-inositol: step 3/7. Functionally, involved in the cleavage of the C1-C2 bond of 3D-(3,5/4)-trihydroxycyclohexane-1,2-dione (THcHDO) to yield 5-deoxy-glucuronate (5DG). This Clostridium perfringens (strain ATCC 13124 / DSM 756 / JCM 1290 / NCIMB 6125 / NCTC 8237 / Type A) protein is 3D-(3,5/4)-trihydroxycyclohexane-1,2-dione hydrolase.